The chain runs to 126 residues: S-adenosylmethionine decarboxylase proenzyme (126 aa).

Ser-63 serves as the catalytic Schiff-base intermediate with substrate; via pyruvic acid. Ser-63 is subject to Pyruvic acid (Ser); by autocatalysis. His-68 serves as the catalytic Proton acceptor; for processing activity. The active-site Proton donor; for catalytic activity is the Cys-83.

This sequence belongs to the prokaryotic AdoMetDC family. Type 1 subfamily. Heterotetramer of two alpha and two beta chains arranged as a dimer of alpha/beta heterodimers. The cofactor is pyruvate. Is synthesized initially as an inactive proenzyme. Formation of the active enzyme involves a self-maturation process in which the active site pyruvoyl group is generated from an internal serine residue via an autocatalytic post-translational modification. Two non-identical subunits are generated from the proenzyme in this reaction, and the pyruvate is formed at the N-terminus of the alpha chain, which is derived from the carboxyl end of the proenzyme. The post-translation cleavage follows an unusual pathway, termed non-hydrolytic serinolysis, in which the side chain hydroxyl group of the serine supplies its oxygen atom to form the C-terminus of the beta chain, while the remainder of the serine residue undergoes an oxidative deamination to produce ammonia and the pyruvoyl group blocking the N-terminus of the alpha chain.

The enzyme catalyses S-adenosyl-L-methionine + H(+) = S-adenosyl 3-(methylsulfanyl)propylamine + CO2. It functions in the pathway amine and polyamine biosynthesis; S-adenosylmethioninamine biosynthesis; S-adenosylmethioninamine from S-adenosyl-L-methionine: step 1/1. Its function is as follows. Catalyzes the decarboxylation of S-adenosylmethionine to S-adenosylmethioninamine (dcAdoMet), the propylamine donor required for the synthesis of the polyamines spermine and spermidine from the diamine putrescine. This Oceanobacillus iheyensis (strain DSM 14371 / CIP 107618 / JCM 11309 / KCTC 3954 / HTE831) protein is S-adenosylmethionine decarboxylase proenzyme.